Consider the following 25-residue polypeptide: Caerin-1.6 (25 aa).

Position 25 is a leucine amide (Leu25).

Belongs to the frog skin active peptide (FSAP) family. Caerin subfamily. Expressed by the skin dorsal glands.

The protein localises to the secreted. In terms of biological role, antimicrobial peptide. Adopts an alpha helical conformation which can disrupt bacterial membranes. Strongly inhibits the formation of NO by neuronal nitric oxide synthase (nNOS) at micromolar concentrations. Acts by a non-competitive mechanism, probably by binding to calcium/calmodulin and as a consequence blocking calmodulin attachment to nNOS. Its function is as follows. Does not show antimicrobial activity. In Ranoidea chloris (Red-eyed tree frog), this protein is Caerin-1.6.